Consider the following 177-residue polypeptide: NAD(P)H-quinone oxidoreductase subunit 6, chloroplastic (177 aa).

5 helical membrane-spanning segments follow: residues 10–30 (FLLV…VLLT), 32–52 (PIFS…FYTP), 61–81 (AQLL…VMFM), 92–112 (LWTV…VSLI), and 152–172 (FFLP…GAIS).

This sequence belongs to the complex I subunit 6 family. As to quaternary structure, NDH is composed of at least 16 different subunits, 5 of which are encoded in the nucleus.

The protein localises to the plastid. It localises to the chloroplast thylakoid membrane. It carries out the reaction a plastoquinone + NADH + (n+1) H(+)(in) = a plastoquinol + NAD(+) + n H(+)(out). It catalyses the reaction a plastoquinone + NADPH + (n+1) H(+)(in) = a plastoquinol + NADP(+) + n H(+)(out). Functionally, NDH shuttles electrons from NAD(P)H:plastoquinone, via FMN and iron-sulfur (Fe-S) centers, to quinones in the photosynthetic chain and possibly in a chloroplast respiratory chain. The immediate electron acceptor for the enzyme in this species is believed to be plastoquinone. Couples the redox reaction to proton translocation, and thus conserves the redox energy in a proton gradient. This is NAD(P)H-quinone oxidoreductase subunit 6, chloroplastic (ndhG) from Ranunculus macranthus (Large buttercup).